Reading from the N-terminus, the 188-residue chain is Large ribosomal subunit protein eL18 (188 aa).

The disordered stretch occupies residues 153–188 (GKAPGTPHSHTKPYVRSKGRKFERARGRRASCGYKN). Over residues 161 to 171 (SHTKPYVRSKG) the composition is skewed to basic residues.

This sequence belongs to the eukaryotic ribosomal protein eL18 family. In terms of assembly, component of the large ribosomal subunit.

It is found in the cytoplasm. It localises to the cytosol. The protein resides in the rough endoplasmic reticulum. Functionally, component of the large ribosomal subunit. The ribosome is a large ribonucleoprotein complex responsible for the synthesis of proteins in the cell. The sequence is that of Large ribosomal subunit protein eL18 (rpl18) from Oreochromis mossambicus (Mozambique tilapia).